Consider the following 586-residue polypeptide: Asparagine synthetase, nodule [glutamine-hydrolyzing] (586 aa).

Catalysis depends on cysteine 2, which acts as the For GATase activity. Residues 2 to 185 (CGILAVLGCS…PGHLYSSKER (184 aa)) enclose the Glutamine amidotransferase type-2 domain. L-glutamine-binding positions include 50–54 (RLAIV), 75–77 (NGE), and aspartate 98. Positions 193–517 (PPWFNEAIIP…PQNSARLTVP (325 aa)) constitute an Asparagine synthetase domain. Residues leucine 232, valine 268, and 342-343 (SG) contribute to the ATP site.

As to expression, root nodules.

The catalysed reaction is L-aspartate + L-glutamine + ATP + H2O = L-asparagine + L-glutamate + AMP + diphosphate + H(+). It participates in amino-acid biosynthesis; L-asparagine biosynthesis; L-asparagine from L-aspartate (L-Gln route): step 1/1. In Pisum sativum (Garden pea), this protein is Asparagine synthetase, nodule [glutamine-hydrolyzing] (AS1).